The chain runs to 245 residues: Pyridoxine 5'-phosphate synthase (245 aa).

Asn7 is a binding site for 3-amino-2-oxopropyl phosphate. Residue Asp9 to His10 participates in 1-deoxy-D-xylulose 5-phosphate binding. Residue Arg18 participates in 3-amino-2-oxopropyl phosphate binding. His43 serves as the catalytic Proton acceptor. 2 residues coordinate 1-deoxy-D-xylulose 5-phosphate: Arg45 and His50. Glu70 (proton acceptor) is an active-site residue. Thr100 contributes to the 1-deoxy-D-xylulose 5-phosphate binding site. His190 functions as the Proton donor in the catalytic mechanism. 3-amino-2-oxopropyl phosphate contacts are provided by residues Gly191 and Gly212–His213.

Belongs to the PNP synthase family. As to quaternary structure, homooctamer; tetramer of dimers.

It localises to the cytoplasm. The enzyme catalyses 3-amino-2-oxopropyl phosphate + 1-deoxy-D-xylulose 5-phosphate = pyridoxine 5'-phosphate + phosphate + 2 H2O + H(+). It participates in cofactor biosynthesis; pyridoxine 5'-phosphate biosynthesis; pyridoxine 5'-phosphate from D-erythrose 4-phosphate: step 5/5. In terms of biological role, catalyzes the complicated ring closure reaction between the two acyclic compounds 1-deoxy-D-xylulose-5-phosphate (DXP) and 3-amino-2-oxopropyl phosphate (1-amino-acetone-3-phosphate or AAP) to form pyridoxine 5'-phosphate (PNP) and inorganic phosphate. The chain is Pyridoxine 5'-phosphate synthase from Prochlorococcus marinus (strain NATL1A).